A 203-amino-acid chain; its full sequence is A-type ATP synthase subunit E (203 aa).

This sequence belongs to the V-ATPase E subunit family. As to quaternary structure, has multiple subunits with at least A(3), B(3), C, D, E, F, H, I and proteolipid K(x).

The protein localises to the cell membrane. Functionally, component of the A-type ATP synthase that produces ATP from ADP in the presence of a proton gradient across the membrane. The protein is A-type ATP synthase subunit E of Desulfurococcus sp. (strain SY).